A 309-amino-acid polypeptide reads, in one-letter code: Peptide methionine sulfoxide reductase MsrA/MsrB (309 aa).

The interval 1–153 is peptide methionine sulfoxide reductase A; sequence MIYLAEGCFW…PNGYCHIDIN (153 aa). Cys8 is a catalytic residue. In terms of domain architecture, MsrB spans 170-293; sequence ATEIKAKLSA…NSLSITFIPK (124 aa). Cys282 functions as the Nucleophile in the catalytic mechanism.

It in the N-terminal section; belongs to the MsrA Met sulfoxide reductase family. The protein in the C-terminal section; belongs to the MsrB Met sulfoxide reductase family.

The catalysed reaction is L-methionyl-[protein] + [thioredoxin]-disulfide + H2O = L-methionyl-(S)-S-oxide-[protein] + [thioredoxin]-dithiol. The enzyme catalyses [thioredoxin]-disulfide + L-methionine + H2O = L-methionine (S)-S-oxide + [thioredoxin]-dithiol. It catalyses the reaction L-methionyl-[protein] + [thioredoxin]-disulfide + H2O = L-methionyl-(R)-S-oxide-[protein] + [thioredoxin]-dithiol. In terms of biological role, has an important function as a repair enzyme for proteins that have been inactivated by oxidation. Catalyzes the reversible oxidation-reduction of methionine sulfoxide in proteins to methionine. The polypeptide is Peptide methionine sulfoxide reductase MsrA/MsrB (msrAB) (Streptococcus pyogenes serotype M3 (strain ATCC BAA-595 / MGAS315)).